A 37-amino-acid chain; its full sequence is Large ribosomal subunit protein bL36 (37 aa).

It belongs to the bacterial ribosomal protein bL36 family.

The polypeptide is Large ribosomal subunit protein bL36 (Hydrogenobaculum sp. (strain Y04AAS1)).